Consider the following 282-residue polypeptide: Transcription factor LBX1 (282 aa).

Residues 1-20 (MTSKEDGKAAPGEERRRSPL) are compositionally biased toward basic and acidic residues. The segment at 1–36 (MTSKEDGKAAPGEERRRSPLDHLPPPANSNKPLTPF) is disordered. A DNA-binding region (homeobox) is located at residues 125–184 (RRKSRTAFTNHQIYELEKRFLYQKYLSPADRDQIAQQLGLTNAQVITWFQNRRAKLKRDL). The segment at 210–282 (ELEQNSEASG…EEDEEIDVDD (73 aa)) is disordered. Residues 218-227 (SGGGGGGGCG) are compositionally biased toward gly residues. Over residues 269 to 282 (CSEDEEDEEIDVDD) the composition is skewed to acidic residues.

As to quaternary structure, interacts with SKOR1 which acts as a transcriptional corepressor. In terms of tissue distribution, expressed in the dorsal part of the spinal cord and hindbrain and in presumptive myogenic cells in lateral regions of differentiating somites.

It localises to the nucleus. Functionally, transcription factor required for the development of GABAergic interneurons in the dorsal horn of the spinal cord and migration and further development of hypaxial muscle precursor cells for limb muscles, diaphragm and hypoglossal cord. The polypeptide is Transcription factor LBX1 (Lbx1) (Mus musculus (Mouse)).